The chain runs to 116 residues: Large ribosomal subunit protein bL19 (116 aa).

Belongs to the bacterial ribosomal protein bL19 family.

In terms of biological role, this protein is located at the 30S-50S ribosomal subunit interface and may play a role in the structure and function of the aminoacyl-tRNA binding site. This chain is Large ribosomal subunit protein bL19, found in Pasteurella multocida (strain Pm70).